Here is a 383-residue protein sequence, read N- to C-terminus: Na(+)/H(+) antiporter NhaA (383 aa).

Transmembrane regions (helical) follow at residues 19–39, 56–76, 92–112, 122–142, 151–171, 174–194, 212–232, 255–275, 292–312, 326–346, and 356–376; these read AGGV…NSPL, VLHG…GLEI, ILPG…FLAL, GWAV…ALLG, IFLT…IALF, AKLS…LAAL, LWGA…ALAL, VGYG…FAGL, LLFG…WLGF, GVAV…ALAF, and VKVG…LVLL.

The protein belongs to the NhaA Na(+)/H(+) (TC 2.A.33) antiporter family.

Its subcellular location is the cell inner membrane. The enzyme catalyses Na(+)(in) + 2 H(+)(out) = Na(+)(out) + 2 H(+)(in). Na(+)/H(+) antiporter that extrudes sodium in exchange for external protons. The polypeptide is Na(+)/H(+) antiporter NhaA (Paramagnetospirillum magneticum (strain ATCC 700264 / AMB-1) (Magnetospirillum magneticum)).